Reading from the N-terminus, the 308-residue chain is Membrane protein insertase YidC 1 (308 aa).

The first 22 residues, 1–22 (MKSIKRFALSAMGAAMLLVLTG), serve as a signal peptide directing secretion. Cys23 is lipidated: N-palmitoyl cysteine. Cys23 carries S-diacylglycerol cysteine lipidation. 5 helical membrane-spanning segments follow: residues 60–80 (FGVA…PLGI), 135–155 (FGGV…AIYF), 168–188 (YLGI…GVLY), 211–225 (MIYM…FSLF), and 230–252 (VTLY…NYIV). The segment at 263 to 308 (ELAKNPSKASAFSTPSGRKDVTPEQPTAITSKKKHKNRNAGKQRSR) is disordered. Residues 269–278 (SKASAFSTPS) show a composition bias toward polar residues. Residues 293–308 (SKKKHKNRNAGKQRSR) are compositionally biased toward basic residues.

This sequence belongs to the OXA1/ALB3/YidC family. Type 2 subfamily.

The protein resides in the cell membrane. Required for the insertion and/or proper folding and/or complex formation of integral membrane proteins into the membrane. Involved in integration of membrane proteins that insert both dependently and independently of the Sec translocase complex, as well as at least some lipoproteins. In Streptococcus pneumoniae (strain ATCC BAA-255 / R6), this protein is Membrane protein insertase YidC 1.